Reading from the N-terminus, the 168-residue chain is Peptide methionine sulfoxide reductase MsrA 2 (168 aa).

C11 is a catalytic residue.

Belongs to the MsrA Met sulfoxide reductase family.

It carries out the reaction L-methionyl-[protein] + [thioredoxin]-disulfide + H2O = L-methionyl-(S)-S-oxide-[protein] + [thioredoxin]-dithiol. It catalyses the reaction [thioredoxin]-disulfide + L-methionine + H2O = L-methionine (S)-S-oxide + [thioredoxin]-dithiol. Functionally, has an important function as a repair enzyme for proteins that have been inactivated by oxidation. Catalyzes the reversible oxidation-reduction of methionine sulfoxide in proteins to methionine. The sequence is that of Peptide methionine sulfoxide reductase MsrA 2 from Rhodopirellula baltica (strain DSM 10527 / NCIMB 13988 / SH1).